Consider the following 640-residue polypeptide: Protein argonaute (640 aa).

Positions 1-100 (MYLNLYEIKI…YIKKKFIDNN (100 aa)) are N-terminal domain. A linker L1 region spans residues 101–153 (FYYKRGNNYISINDKFPLDSNTNVNAHLTYKIKLYKINERYYISVLPKFTFLS). Residues 154–209 (DKPALESPIKSTYLFNIKSGKTFPYISGLNGVLKIDLGENGIKEVLFPENYYFNFT) form a PAZ domain region. The linker L2 stretch occupies residues 210–291 (SKEAEKFGFS…KYSFYKNDQK (82 aa)). The interval 292-423 (IKIAFFFSSK…YVYKMGNFIP (132 aa)) is mid domain. The PIWI domain stretch occupies residues 424 to 640 (ECQPYVIRNL…EWKLYIPYMK (217 aa)). Active-site residues include Asp-445, Glu-481, Asp-515, and Asn-623. Asp-445 serves as a coordination point for Mn(2+). 2 residues coordinate Mn(2+): Asp-515 and Asn-623.

The protein belongs to the argonaute family. Long pAgo subfamily. Requires Mn(2+) as cofactor.

A highly versatile argonaute that uses 5'-phospho- and 5'-OH- guide RNA (gRNA) or DNA (gDNA) to cleave target RNA or ssDNA (tDNA) in all possible combinations; has no detectable activity in the absence of guide. Uses short guide sequences (18-21 nucleotides (nt) on average) to bind complementary target nucleic acids resulting in target cleavage in a site-specific manner. Using 5'-phospho-gRNA or 5'-OH-gRNA the cleavage site is 10 nt downstream of the target residue base-paired with the 5'-end of the gRNA, using 5'-phospho-gDNA the cleavage site is 11 nucleotides (nt) downstream, while with 5'-OH-gDNA the cleavage site is 9 nt downstream. This is Protein argonaute from Marinitoga hydrogenitolerans (strain DSM 16785 / JCM 12826 / AT1271).